The sequence spans 195 residues: ATP-dependent Clp protease proteolytic subunit 2 (195 aa).

The active-site Nucleophile is serine 98. Histidine 123 is a catalytic residue.

Belongs to the peptidase S14 family. As to quaternary structure, fourteen ClpP subunits assemble into 2 heptameric rings which stack back to back to give a disk-like structure with a central cavity, resembling the structure of eukaryotic proteasomes.

It is found in the cytoplasm. The enzyme catalyses Hydrolysis of proteins to small peptides in the presence of ATP and magnesium. alpha-casein is the usual test substrate. In the absence of ATP, only oligopeptides shorter than five residues are hydrolyzed (such as succinyl-Leu-Tyr-|-NHMec, and Leu-Tyr-Leu-|-Tyr-Trp, in which cleavage of the -Tyr-|-Leu- and -Tyr-|-Trp bonds also occurs).. In terms of biological role, cleaves peptides in various proteins in a process that requires ATP hydrolysis. Has a chymotrypsin-like activity. Plays a major role in the degradation of misfolded proteins. The sequence is that of ATP-dependent Clp protease proteolytic subunit 2 from Rhodopirellula baltica (strain DSM 10527 / NCIMB 13988 / SH1).